Reading from the N-terminus, the 197-residue chain is Ras-related protein Rab-7B (197 aa).

GTP is bound by residues 14-21 (GEKSVGKT), 33-38 (VTLKPT), 57-61 (DTSGQ), 119-122 (NKID), and 152-153 (AK). The Effector region motif lies at 31 to 39 (RFVTLKPTI). Residues cysteine 196 and cysteine 197 are each lipidated (S-geranylgeranyl cysteine).

The protein belongs to the small GTPase superfamily. Rab family.

Its function is as follows. Protein transport. Probably involved in vesicular traffic. The polypeptide is Ras-related protein Rab-7B (rab7B) (Dictyostelium discoideum (Social amoeba)).